The chain runs to 521 residues: MNLDLLLILTAVIMLIVGFAVGAILQKKAHEREIDGANKTAKGIIELAEKEAATRKKEILLEAKDENHQYRSEIENELKDRRGEVQKQENRLIQREETMDRKDATLDKKERTLEEHESRLAEQAQQLKEKQAEVETLVEQQRTKLQEIAELSHDDAQKIILDETKRNLDHERAVLIKESEESAKEHADRTAKTLVAEAIQRSAADMVAETTVTVVTLPNDDMKGRIIGREGRNIRTLETLTGIDLIIDDTPEAVVLSGFDPIRREIARMTLEKLIQDGRIHPARIEEMVDKSRKEMDEQIRQIGEQAIFDVGIHTMHPDLIKILGRLHFRTSYGQNVLNHSIEVAKLTGILAAELGEDVTLAKRAGLLHDIGKALDHEVDGSHVEIGVELATRYKEPATVINAIGSHHGDIEATSIISVLVAASDAISAARPGARSESLENYIHRLEKLESITNSFKGVDHSFAIQAGREVRVIVKPEQVTDDQATVLARDVKNQIEDQLEYPGHIKVTVIRETRTVEYAK.

A helical transmembrane segment spans residues 5–25 (LLLILTAVIMLIVGFAVGAIL). The interval 77 to 107 (ELKDRRGEVQKQENRLIQREETMDRKDATLD) is disordered. One can recognise a KH domain in the interval 211-271 (TVTVVTLPND…IRREIARMTL (61 aa)). One can recognise an HD domain in the interval 337–430 (VLNHSIEVAK…VAASDAISAA (94 aa)).

It belongs to the RNase Y family.

It localises to the cell membrane. Functionally, endoribonuclease that initiates mRNA decay. This is Ribonuclease Y from Latilactobacillus sakei subsp. sakei (strain 23K) (Lactobacillus sakei subsp. sakei).